Here is a 619-residue protein sequence, read N- to C-terminus: Nucleolar GTP-binding protein 2 (619 aa).

Residues Met1 to Arg10 are compositionally biased toward basic and acidic residues. The segment at Met1–Lys24 is disordered. In terms of domain architecture, CP-type G spans Trp222–Pro383. GTP-binding positions include Gly332–Ser339 and Asp376–Ile380. Residues Pro473–Lys619 are disordered. The segment covering Met489–Ser500 has biased composition (basic and acidic residues). Positions Ser536 to Ala546 are enriched in acidic residues. Residues Glu547 to Ala556 show a composition bias toward basic and acidic residues. The span at Ser565–Ala603 shows a compositional bias: acidic residues.

It belongs to the TRAFAC class YlqF/YawG GTPase family. NOG2 subfamily.

The protein localises to the nucleus. Its subcellular location is the nucleolus. Functionally, GTPase that associates with pre-60S ribosomal subunits in the nucleolus and is required for their nuclear export and maturation. The polypeptide is Nucleolar GTP-binding protein 2 (nog-2) (Neurospora crassa (strain ATCC 24698 / 74-OR23-1A / CBS 708.71 / DSM 1257 / FGSC 987)).